The primary structure comprises 340 residues: Methionine import ATP-binding protein MetN (340 aa).

In terms of domain architecture, ABC transporter spans 8–246; it reads ISVKNLNKEI…PYSSITEELF (239 aa). 40 to 47 lines the ATP pocket; the sequence is GHSGSGKS.

It belongs to the ABC transporter superfamily. Methionine importer (TC 3.A.1.24) family. The complex is composed of two ATP-binding proteins (MetN), two transmembrane proteins (MetI) and a solute-binding protein (MetQ).

The protein resides in the cell inner membrane. It catalyses the reaction L-methionine(out) + ATP + H2O = L-methionine(in) + ADP + phosphate + H(+). It carries out the reaction D-methionine(out) + ATP + H2O = D-methionine(in) + ADP + phosphate + H(+). In terms of biological role, part of the ABC transporter complex MetNIQ involved in methionine import. Responsible for energy coupling to the transport system. The protein is Methionine import ATP-binding protein MetN of Chlamydia felis (strain Fe/C-56) (Chlamydophila felis).